Consider the following 578-residue polypeptide: Acyl-CoA synthetase ACTT5 (578 aa).

Residue 211–222 coordinates AMP; the sequence is RLTTSGTTGLPK. The AMP-binding stretch occupies residues 472-551; the sequence is ELEAALLQAK…DEIPRSPTGK (80 aa).

Belongs to the ATP-dependent AMP-binding enzyme family.

Its pathway is mycotoxin biosynthesis. Its function is as follows. Acyl-CoA synthetase; part of the gene clusters that mediate the biosynthesis of the host-selective toxins (HSTs) ACT-toxins responsible for brown spot of tangerine disease by the tangerine pathotype which affects tangerines and mandarins. ACT-toxins consist of three moieties, 9,10-epoxy-8-hydroxy-9-methyl-decatrienoic acid (EDA), valine and a polyketide. ACT-toxin I is toxic to both citrus and pear; toxin II the 5''-deoxy derivative of ACT-toxin I, is highly toxic to pear and slightly toxic to citrus. On cellular level, ACT-toxins affect plasma membrane of susceptible cells and cause a sudden increase in loss of K(+) after a few minutes of toxin treatment. The acyl-CoA ligase ACTT1, the hydrolase ACTT2, the enoyl-CoA hydratases ACTT3 and ACTT6, and the acyl-CoA synthetase ACTT5 are all involved in the biosynthesis of the AK-, AF- and ACT-toxin common 9,10-epoxy-8-hydroxy-9-methyl-decatrienoic acid (EDA) structural moiety. The exact role of each enzyme, and of additional enzymes identified within the AF-toxin clusters have still to be determined. On the other hand, ACTTS1 to ACTTS4 are specific to the tangerine pathotype. The function of ACTTS3 is to elongate the polyketide chain portion of ACT-toxin that is unique to this toxin. The enoyl-reductase ACTTS2 might complement the missing enoyl-reductase (ER) domain in ACTTS3 in the synthesis of the polyketide portion of ACT-toxin. The roles of the nonribosomal peptide synthetases-related proteins ACTTS1 and ACTTS4 have also still not been elucidated. The sequence is that of Acyl-CoA synthetase ACTT5 from Alternaria alternata (Alternaria rot fungus).